Consider the following 642-residue polypeptide: Frizzled and smoothened-like protein B (642 aa).

The signal sequence occupies residues 1-26; that stretch reads MFNKNNNNNKIIIILKLFLIILIVNN. At 27 to 264 the chain is on the extracellular side; that stretch reads NNNIKTFGLN…KWHQMYNMSK (238 aa). One can recognise an FZ domain in the interval 47–197; it reads DPTATCSNYI…GFFPVPCSDP (151 aa). Cystine bridges form between cysteine 52–cysteine 123, cysteine 65–cysteine 116, and cysteine 143–cysteine 194. 7 N-linked (GlcNAc...) asparagine glycosylation sites follow: asparagine 80, asparagine 153, asparagine 162, asparagine 177, asparagine 203, asparagine 222, and asparagine 261. Residues 265-285 traverse the membrane as a helical segment; it reads ILSTISFVCSIYNVLTFGILN. Over 286–294 the chain is Cytoplasmic; the sequence is HRRSKYNYC. Residues 295-315 form a helical membrane-spanning segment; it reads ITFFSASVIIITMMDIVTYGI. At 316-344 the chain is on the extracellular side; sequence GYEKLLCPEPGRFAVQSDVSCGATGALFH. Residues 345-365 form a helical membrane-spanning segment; it reads IGITNGVFWWTTMSICLFAVV. Over 366–375 the chain is Cytoplasmic; sequence KRIKLFDFRY. The chain crosses the membrane as a helical span at residues 376-398; the sequence is FIIFNTTASLISVIIPLAGNAFM. Over 399–416 the chain is Extracellular; that stretch reads AGTGSLACWIRKTWYVNS. Residues 417-437 traverse the membrane as a helical segment; sequence VFWIPCGIALTIGSVCIILVI. Residues 438–460 are Cytoplasmic-facing; sequence YEIYKITKNVSTKDNRMILLQIK. Residues 461–481 traverse the membrane as a helical segment; it reads PFLCVTLVGGSFYYLFIFNFD. Asparagine 482 is a glycosylation site (N-linked (GlcNAc...) asparagine). Topologically, residues 482–514 are extracellular; the sequence is NESHSKEYKEKVVDYVMCLLSDTGKECLMAGPN. A helical membrane pass occupies residues 515 to 535; the sequence is YVAYFVFYFFIRLFGITFFCI. Topologically, residues 536 to 642 are cytoplasmic; the sequence is YGTSQNARDI…INSASNTSSD (107 aa). The interval 578 to 642 is disordered; sequence GTNPTSNSKN…INSASNTSSD (65 aa). The segment covering 583–598 has biased composition (low complexity); the sequence is SNSKNSKNNQNNQNNN. A coiled-coil region spans residues 584–611; that stretch reads NSKNSKNNQNNQNNNSRKEFESKNIELE. The segment covering 599–609 has biased composition (basic and acidic residues); it reads SRKEFESKNIE. Composition is skewed to polar residues over residues 614–623 and 632–642; these read ESISKGQTTR and NINSASNTSSD.

The protein belongs to the G-protein coupled receptor Fz/Smo family.

It is found in the membrane. This is Frizzled and smoothened-like protein B (fslB) from Dictyostelium discoideum (Social amoeba).